The following is a 452-amino-acid chain: Retinoid-inducible serine carboxypeptidase (452 aa).

A signal peptide spans 1 to 26 (MELALRRSPVPRWLLLLPLLLGLNAG). N-linked (GlcNAc...) asparagine glycans are attached at residues asparagine 64 and asparagine 126. Serine 167 is a catalytic residue. Asparagine 362 carries N-linked (GlcNAc...) asparagine glycosylation. Active-site residues include aspartate 371 and histidine 431.

This sequence belongs to the peptidase S10 family.

It is found in the secreted. Its function is as follows. May be involved in vascular wall and kidney homeostasis. In Homo sapiens (Human), this protein is Retinoid-inducible serine carboxypeptidase (SCPEP1).